The following is a 1091-amino-acid chain: Error-prone DNA polymerase 1 (1091 aa).

Residues R1051–R1064 are compositionally biased toward basic and acidic residues. The segment at R1051–V1080 is disordered.

The protein belongs to the DNA polymerase type-C family. DnaE2 subfamily.

It is found in the cytoplasm. The enzyme catalyses DNA(n) + a 2'-deoxyribonucleoside 5'-triphosphate = DNA(n+1) + diphosphate. Its function is as follows. DNA polymerase involved in damage-induced mutagenesis and translesion synthesis (TLS). It is not the major replicative DNA polymerase. This is Error-prone DNA polymerase 1 from Agrobacterium fabrum (strain C58 / ATCC 33970) (Agrobacterium tumefaciens (strain C58)).